A 281-amino-acid chain; its full sequence is 3'-5' exonuclease Snipper (281 aa).

A disordered region spans residues 19 to 52 (DGARPDPNNDPEESFNEDEVTEANSVPAKSKKSR). Acidic residues predominate over residues 27-39 (NDPEESFNEDEVT). Positions 64–262 (YVIAVDFEAT…MCKMVRDGAL (199 aa)) constitute an Exonuclease domain. Residues aspartate 69 and glutamate 71 each contribute to the Mg(2+) site. The active-site Proton acceptor is glutamate 71. The AMP site is built by glutamate 71 and alanine 72. Residue aspartate 183 coordinates Mg(2+). The active-site Proton acceptor is histidine 240. Residue histidine 240 coordinates AMP. Mg(2+) is bound at residue aspartate 245.

This sequence belongs to the ERI2 family. Requires Mg(2+) as cofactor.

Its subcellular location is the cytoplasm. The protein localises to the nucleus. The protein resides in the nucleolus. Its function is as follows. A broad-specificity exonuclease, capable of degrading both structure-specific DNA and RNA targets without sequence specificity in vitro. Requires two to five unpaired nucleotides in the 3' region for efficient binding and nuclease activity. Binds with higher affinity to RNA and DNA stem-loop substrates compared to single-stranded substrate. Binds to the 3'-end of histone mRNAs and degrades them, suggesting that it might play a role in histone mRNA decay after replication. Can readily cleave the histone stem-loop RNA beyond the -12 (UUU) position in the loop to produce -14 and then -16 oligonucleotide fragments for both the stem-loop and the reverse stem-loop. Cleaves both the single-stranded 3' flank as well as the double-stranded stem portion of histone stem-loop RNA. Might affect histone mRNA 3' processing thereby regulating histone protein expression. Has an important role in development and tissue formation. Might have a role in 5.8S rRNA precursor processing. This chain is 3'-5' exonuclease Snipper, found in Drosophila melanogaster (Fruit fly).